The sequence spans 797 residues: Calcium-transporting ATPase CtpE (797 aa).

A run of 3 helical transmembrane segments spans residues 55 to 75, 215 to 235, and 254 to 274; these read LLLI…LLII, ILQF…YTQL, and VPMV…VGVV. The active-site 4-aspartylphosphate intermediate is Asp-301. Positions 301, 303, and 536 each coordinate Mg(2+). 6 consecutive transmembrane segments (helical) span residues 601–621, 633–653, 667–687, 703–723, 729–749, and 764–784; these read TVYS…AIPL, IHVT…LSLA, VMTS…VTYL, ASTA…AVIA, WRLA…SLPL, and TSIA…MWWI.

Belongs to the cation transport ATPase (P-type) (TC 3.A.3) family.

The protein localises to the cell membrane. It carries out the reaction Ca(2+)(in) + ATP + H2O = Ca(2+)(out) + ADP + phosphate + H(+). Functionally, P-type ATPase involved in specific uptake of calcium. The polypeptide is Calcium-transporting ATPase CtpE (ctpE) (Mycobacterium tuberculosis (strain CDC 1551 / Oshkosh)).